We begin with the raw amino-acid sequence, 164 residues long: Lipoprotein signal peptidase (164 aa).

4 helical membrane passes run 8 to 28 (IVAA…LLFV), 39 to 59 (VTPF…GWFQ), 64 to 84 (VGAT…AIWM), and 91 to 111 (LATI…IDRF). Active-site residues include Asp-118 and Asp-140. Residues 131-151 (YSWYVFNLADVAIVAGVIALL) form a helical membrane-spanning segment.

The protein belongs to the peptidase A8 family.

It is found in the cell inner membrane. The catalysed reaction is Release of signal peptides from bacterial membrane prolipoproteins. Hydrolyzes -Xaa-Yaa-Zaa-|-(S,diacylglyceryl)Cys-, in which Xaa is hydrophobic (preferably Leu), and Yaa (Ala or Ser) and Zaa (Gly or Ala) have small, neutral side chains.. The protein operates within protein modification; lipoprotein biosynthesis (signal peptide cleavage). This protein specifically catalyzes the removal of signal peptides from prolipoproteins. The polypeptide is Lipoprotein signal peptidase (Nitrobacter hamburgensis (strain DSM 10229 / NCIMB 13809 / X14)).